Consider the following 306-residue polypeptide: MAVTWEEYFRLVFSEKVQPKPLEQTGDDSSVLQLILEKKEELAVADLGLQAQKKEYRSTIESVNQRWRELEQKGQELQGSVISYDKFLKEVEARRAARKAIEERKITGNLDAELRRLRTQLKELRLQRARLQRKVQRLEPCARILKRALEKRPVFEEVSDLVARFETLVSTKAALKLEEQKRLVEMESTRAQLLSLQSEKQDEMLNLNQQRTQLVEQLEAAREHRQQWESKWTEILNSASEKTLLLGRARMAVLNLYHLVRLQQGRRQTLDVRDVEGQLEEVKRFIMNISATLAKLALAQPTATAS.

Coiled coils occupy residues 49-139 (LQAQ…QRLE) and 197-231 (QSEK…WESK).

Belongs to the CFAP73 family.

The protein resides in the cytoplasm. Its subcellular location is the cytoskeleton. It is found in the cilium axoneme. May play a role in ciliary/flagellar motility by regulating the assembly and the activity of axonemal inner dynein arm. In Mus musculus (Mouse), this protein is Cilia- and flagella-associated protein 73.